The primary structure comprises 416 residues: Multifunctional CCA protein (416 aa).

ATP contacts are provided by Gly8 and Arg11. The CTP site is built by Gly8 and Arg11. The Mg(2+) site is built by Asp21 and Asp23. Arg91, Arg137, and Arg140 together coordinate ATP. CTP is bound by residues Arg91, Arg137, and Arg140. Residues 228 to 329 enclose the HD domain; it reads TGVHTLMVLA…VKIFDKADFW (102 aa).

It belongs to the tRNA nucleotidyltransferase/poly(A) polymerase family. Bacterial CCA-adding enzyme type 1 subfamily. In terms of assembly, monomer. Can also form homodimers and oligomers. The cofactor is Mg(2+). It depends on Ni(2+) as a cofactor.

The catalysed reaction is a tRNA precursor + 2 CTP + ATP = a tRNA with a 3' CCA end + 3 diphosphate. It catalyses the reaction a tRNA with a 3' CCA end + 2 CTP + ATP = a tRNA with a 3' CCACCA end + 3 diphosphate. Catalyzes the addition and repair of the essential 3'-terminal CCA sequence in tRNAs without using a nucleic acid template. Adds these three nucleotides in the order of C, C, and A to the tRNA nucleotide-73, using CTP and ATP as substrates and producing inorganic pyrophosphate. tRNA 3'-terminal CCA addition is required both for tRNA processing and repair. Also involved in tRNA surveillance by mediating tandem CCA addition to generate a CCACCA at the 3' terminus of unstable tRNAs. While stable tRNAs receive only 3'-terminal CCA, unstable tRNAs are marked with CCACCA and rapidly degraded. This chain is Multifunctional CCA protein, found in Shewanella baltica (strain OS185).